A 284-amino-acid polypeptide reads, in one-letter code: MKVFILALLALAATTAIAQLETTCSQGFGQSQQQQQPGQRQLLEQMKPCVAFLQQKCSPLRMPFLQTQVEQLSSCQIVQYQCCQQLAQIPERTRCHAIHIVVEAIIQQQSQQQWQEPQQQAQHKSMRMLLENLSLMCNIYVPVQCQQQQQLGQQQQQQLQEQLTPCTTFLQQQCSPVTVPFPQIPVDQPTSCQNVQHQCCRQLSQIPEQFRCQAIHNVAEAIRQQQPQQQWQGMYQPQQPAQLESIRMSLQALRSMRSIYIPVQCPAPTTYNIPLVATYTGGAC.

An N-terminal signal peptide occupies residues 1-18 (MKVFILALLALAATTAIA).

The protein belongs to the prolamin family. Contains disulfide bonds.

In terms of biological role, seed storage protein. Might be integrated via inter-chain disulfide bonds within the glutenin polymer. The polypeptide is Avenin-like b10 (Triticum aestivum (Wheat)).